The following is a 534-amino-acid chain: NAD(P)H-quinone oxidoreductase chain 4 (534 aa).

Transmembrane regions (helical) follow at residues 12–32 (FPWL…IPFF), 44–64 (FALS…INGF), 96–116 (MPLI…AWPV), 120–140 (PKLF…VFAV), 144–164 (LLFF…LAIW), 176–196 (FIIY…AMGF), 220–240 (ILCY…VPLH), 251–271 (TAPV…YALL), 285–305 (FAPL…LTSF), 314–334 (IAYS…SFSS), 340–360 (AMLQ…LVGA), 384–404 (FALW…SGFV), 425–445 (VVMA…LLSM), and 472–492 (VYII…PRLV).

It belongs to the complex I subunit 4 family.

The protein localises to the cellular thylakoid membrane. The enzyme catalyses a plastoquinone + NADH + (n+1) H(+)(in) = a plastoquinol + NAD(+) + n H(+)(out). It carries out the reaction a plastoquinone + NADPH + (n+1) H(+)(in) = a plastoquinol + NADP(+) + n H(+)(out). Functionally, NDH-1 shuttles electrons from NAD(P)H, via FMN and iron-sulfur (Fe-S) centers, to quinones in the respiratory chain. The immediate electron acceptor for the enzyme in this species is believed to be plastoquinone. Couples the redox reaction to proton translocation (for every two electrons transferred, four hydrogen ions are translocated across the cytoplasmic membrane), and thus conserves the redox energy in a proton gradient. The protein is NAD(P)H-quinone oxidoreductase chain 4 of Prochlorococcus marinus (strain AS9601).